Consider the following 551-residue polypeptide: METEADTAKTFWSEVDVDGVFDELMEVLRRLRHTLRHNTATDREYVQAMRIVQESKLIRTETEDVLLDEDILTVTVSEPQCSPESLQNGIEPEDPQHSTARLYSDVGVVCSHMSSSRPDPAAPLVFQPHVCSSACVPHLPAHTHHLLGHNPLRAPLLCHFQRVCDDAGVVYKAPCGRSLSCMQEVLHFLLQTQSVCVLQTDRFSFSTQVCVERQVCAAPLLERDLSRGLEPVPVALVNTVDGARPREFRYRRERWPHGCFLSAEPLYSVCCDCTDGCTDAHSCACVRRTAGAAYTHQRLTHTLRTGLFECGPWCGCERSRCENRVVQKGLRVRLQVFRTPEHMWAVRCRDDLDAGTFICIYAGVVLRLQQSSECPAERSGEPAVSDDEVQLVEEWRIPEETHTHTHTLDSSPPLHVPVIQRPAEHSLAQRRDQQQFSISSETEDNRCEQALRKKPRLMESNGLQDSRTHTLTHTHDGVYYLDASREGNVARFFTHSDDPNLFIQNVFTDTHDPQFPLIAFFTCRPVKAGTELTWSCTNTEQQKTEEKHCSV.

Residues 146–210 (LLGHNPLRAP…DRFSFSTQVC (65 aa)) form the MBD domain. The Pre-SET domain maps to 269–329 (VCCDCTDGCT…RCENRVVQKG (61 aa)). Zn(2+) is bound by residues C271, C273, C277, C283, C285, C310, C314, C316, and C321. In terms of domain architecture, SET spans 332–537 (VRLQVFRTPE…AGTELTWSCT (206 aa)). Position 342-344 (342-344 (HMW)) interacts with S-adenosyl-L-methionine. Residues 426–447 (SLAQRRDQQQFSISSETEDNRC) are disordered. S-adenosyl-L-methionine contacts are provided by residues R491 and 494–495 (TH).

Belongs to the class V-like SAM-binding methyltransferase superfamily.

It is found in the nucleus. The protein resides in the chromosome. It carries out the reaction N(6),N(6)-dimethyl-L-lysyl(9)-[histone H3] + S-adenosyl-L-methionine = N(6),N(6),N(6)-trimethyl-L-lysyl(9)-[histone H3] + S-adenosyl-L-homocysteine + H(+). Its function is as follows. Histone methyltransferase involved in left-right axis specification in early development and mitosis. Specifically trimethylates 'Lys-9' of histone H3 (H3K9me3). H3K9me3 represents a specific tag for epigenetic transcriptional repression by recruiting HP1 (CBX1, CBX3 and/or CBX5) proteins to methylated histones. Contributes to H3K9me3 in both the interspersed repetitive elements and centromere-associated repeats. Plays a role in chromosome condensation and segregation during mitosis. During early development, required to specify the left-right axis by repressing expression of FGF8, leading to negatively regulate the dorsal organizer formation. This is Histone-lysine N-methyltransferase SETDB2 (setdb2) from Danio rerio (Zebrafish).